Consider the following 278-residue polypeptide: 4-deoxy-L-threo-5-hexosulose-uronate ketol-isomerase (278 aa).

Zn(2+) contacts are provided by H196, H198, E203, and H245.

The protein belongs to the KduI family. It depends on Zn(2+) as a cofactor.

The catalysed reaction is 5-dehydro-4-deoxy-D-glucuronate = 3-deoxy-D-glycero-2,5-hexodiulosonate. It participates in glycan metabolism; pectin degradation; 2-dehydro-3-deoxy-D-gluconate from pectin: step 4/5. Catalyzes the isomerization of 5-dehydro-4-deoxy-D-glucuronate to 3-deoxy-D-glycero-2,5-hexodiulosonate. The protein is 4-deoxy-L-threo-5-hexosulose-uronate ketol-isomerase of Salmonella paratyphi A (strain ATCC 9150 / SARB42).